Here is a 53-residue protein sequence, read N- to C-terminus: Conotoxin Cal6.27 (53 aa).

The first 24 residues, 1-24 (MKLTCVLIAAMLLLAVCQLDSADA), serve as a signal peptide directing secretion. Cystine bridges form between Cys-29–Cys-43, Cys-36–Cys-47, and Cys-42–Cys-51.

This sequence belongs to the conotoxin O1 superfamily. As to expression, expressed by the venom duct.

The protein localises to the secreted. Probable neurotoxin. This is Conotoxin Cal6.27 from Californiconus californicus (California cone).